A 232-amino-acid chain; its full sequence is Ornithine carbamoyltransferase (232 aa).

Carbamoyl phosphate is bound by residues glutamine 15, arginine 39, and 66–69 (HPTQ). L-ornithine contacts are provided by residues asparagine 99, aspartate 163, and 167 to 168 (SM). Carbamoyl phosphate is bound by residues 204–207 (HCLP) and threonine 232.

Belongs to the aspartate/ornithine carbamoyltransferase superfamily. OTCase family.

It is found in the cytoplasm. The enzyme catalyses carbamoyl phosphate + L-ornithine = L-citrulline + phosphate + H(+). The protein operates within amino-acid biosynthesis; L-arginine biosynthesis; L-arginine from L-ornithine and carbamoyl phosphate: step 1/3. Functionally, reversibly catalyzes the transfer of the carbamoyl group from carbamoyl phosphate (CP) to the N(epsilon) atom of ornithine (ORN) to produce L-citrulline. The polypeptide is Ornithine carbamoyltransferase (argF) (Neisseria pharyngis).